A 161-amino-acid chain; its full sequence is Large ribosomal subunit protein uL15 (161 aa).

The span at 1–13 (MKLNELRDNEGAA) shows a compositional bias: basic and acidic residues. The disordered stretch occupies residues 1–51 (MKLNELRDNEGAARKKKRVARGPGSGKGKTAGRGIKGQKSRSGVALNGYEG). Positions 23–35 (PGSGKGKTAGRGI) are enriched in gly residues.

Belongs to the universal ribosomal protein uL15 family. As to quaternary structure, part of the 50S ribosomal subunit.

In terms of biological role, binds to the 23S rRNA. The sequence is that of Large ribosomal subunit protein uL15 from Cereibacter sphaeroides (strain ATCC 17023 / DSM 158 / JCM 6121 / CCUG 31486 / LMG 2827 / NBRC 12203 / NCIMB 8253 / ATH 2.4.1.) (Rhodobacter sphaeroides).